The sequence spans 161 residues: Cytochrome c-type biogenesis protein CcmE (161 aa).

The Cytoplasmic segment spans residues 1 to 8 (MNPRRKKR). Residues 9–29 (LGLILALFVGISATVGLMLYA) form a helical; Signal-anchor for type II membrane protein membrane-spanning segment. Residues 30-161 (LNQNMDLFYT…TEQQKQGTGQ (132 aa)) are Periplasmic-facing. Heme-binding residues include His129 and Tyr133. The disordered stretch occupies residues 142–161 (MKKTHEPLQYTEQQKQGTGQ). Positions 151-161 (YTEQQKQGTGQ) are enriched in polar residues.

This sequence belongs to the CcmE/CycJ family.

The protein resides in the cell inner membrane. Heme chaperone required for the biogenesis of c-type cytochromes. Transiently binds heme delivered by CcmC and transfers the heme to apo-cytochromes in a process facilitated by CcmF and CcmH. This Aliivibrio fischeri (strain ATCC 700601 / ES114) (Vibrio fischeri) protein is Cytochrome c-type biogenesis protein CcmE.